The sequence spans 160 residues: Transcription elongation factor GreA (160 aa).

A coiled-coil region spans residues 14–76 (VKKLEEELEY…QLENMLKNAS (63 aa)).

It belongs to the GreA/GreB family.

Necessary for efficient RNA polymerase transcription elongation past template-encoded arresting sites. The arresting sites in DNA have the property of trapping a certain fraction of elongating RNA polymerases that pass through, resulting in locked ternary complexes. Cleavage of the nascent transcript by cleavage factors such as GreA or GreB allows the resumption of elongation from the new 3'terminus. GreA releases sequences of 2 to 3 nucleotides. This Clostridium botulinum (strain Okra / Type B1) protein is Transcription elongation factor GreA.